Consider the following 546-residue polypeptide: Glutamate--tRNA ligase (546 aa).

A 'HIGH' region motif is present at residues 42 to 52; it reads PSPTGFIHLGN. A 'KMSKS' region motif is present at residues 293 to 297; the sequence is KLSKR. ATP is bound at residue Lys-296.

It belongs to the class-I aminoacyl-tRNA synthetase family. Glutamate--tRNA ligase type 1 subfamily. Monomer.

It is found in the cytoplasm. It carries out the reaction tRNA(Glu) + L-glutamate + ATP = L-glutamyl-tRNA(Glu) + AMP + diphosphate. Catalyzes the attachment of glutamate to tRNA(Glu) in a two-step reaction: glutamate is first activated by ATP to form Glu-AMP and then transferred to the acceptor end of tRNA(Glu). The polypeptide is Glutamate--tRNA ligase (Acetivibrio thermocellus (strain ATCC 27405 / DSM 1237 / JCM 9322 / NBRC 103400 / NCIMB 10682 / NRRL B-4536 / VPI 7372) (Clostridium thermocellum)).